We begin with the raw amino-acid sequence, 441 residues long: Keratin, type I cytoskeletal 15 (441 aa).

A head region spans residues 2 to 91 (LLLGHASTST…GGSDLLLGTS (90 aa)). Positions 92–127 (GKEAMQNLNDRLASYLDKVRSLEGKNHELELKIKDW) are coil 1A. Residues 92 to 407 (GKEAMQNLND…MLLDSEDSKG (316 aa)) enclose the IF rod domain. The linker 1 stretch occupies residues 128 to 149 (YSQVIPGTGGPDARDYGHLEKE). Residues 150–241 (IEDLQNKVNN…KNHEEDMKAA (92 aa)) form a coil 1B region. The segment at 242–261 (SSGIAGQVNVELDAAPGTNL) is linker 12. Residues 262–403 (LDELDACRRD…ATYRMLLDSE (142 aa)) are coil 2. Residues 404–441 (DSKGSIINHKILTAIEKLVDGIVLSTEVLEKQIPVLSY) are tail.

The protein belongs to the intermediate filament family. As to quaternary structure, heterotetramer of two type I and two type II keratins. As to expression, expressed in skin.

The polypeptide is Keratin, type I cytoskeletal 15 (KRT15) (Protopterus aethiopicus (Marbled lungfish)).